Consider the following 214-residue polypeptide: MKASFWHEKWKKREIGFHESVVNPALTDHWHALSAAGGSVFVPLCGKSLDLGWLLSQGVSVIGVELSEIAVQELFVSLDIEPSVSDVENFKLYSAENIAIWVGDIFNLNKAWLGVITAIYDRAALVALPESMRLEYAGKLIELSNCATQLLVTFEYDQSLHQGPPFSVPESAVQKCYGTRYQLQCLERKAVAGGLKGRIAATESVWKLSRNINS.

W10, L44, E65, and R122 together coordinate S-adenosyl-L-methionine.

It belongs to the class I-like SAM-binding methyltransferase superfamily. TPMT family.

It localises to the cytoplasm. It carries out the reaction S-adenosyl-L-methionine + a thiopurine = S-adenosyl-L-homocysteine + a thiopurine S-methylether.. This is Thiopurine S-methyltransferase from Teredinibacter turnerae (strain ATCC 39867 / T7901).